A 320-amino-acid chain; its full sequence is ATP-dependent 6-phosphofructokinase (320 aa).

Glycine 12 serves as a coordination point for ATP. Arginine 22 to arginine 26 serves as a coordination point for ADP. ATP contacts are provided by residues arginine 73 to phenylalanine 74 and glycine 103 to serine 106. Residue aspartate 104 coordinates Mg(2+). Residue threonine 126–aspartate 128 participates in substrate binding. Aspartate 128 (proton acceptor) is an active-site residue. ADP is bound at residue arginine 155. Residues arginine 163 and methionine 170 to arginine 172 contribute to the substrate site. ADP is bound by residues glycine 186–glutamate 188, lysine 212, and lysine 214–histidine 216. Substrate contacts are provided by residues glutamate 223, arginine 244, and histidine 250–arginine 253.

Belongs to the phosphofructokinase type A (PFKA) family. ATP-dependent PFK group I subfamily. Prokaryotic clade 'B1' sub-subfamily. In terms of assembly, homotetramer. Requires Mg(2+) as cofactor.

It localises to the cytoplasm. The enzyme catalyses beta-D-fructose 6-phosphate + ATP = beta-D-fructose 1,6-bisphosphate + ADP + H(+). It participates in carbohydrate degradation; glycolysis; D-glyceraldehyde 3-phosphate and glycerone phosphate from D-glucose: step 3/4. Its activity is regulated as follows. Allosterically activated by ADP and other diphosphonucleosides, and allosterically inhibited by phosphoenolpyruvate. Catalyzes the phosphorylation of D-fructose 6-phosphate to fructose 1,6-bisphosphate by ATP, the first committing step of glycolysis. This is ATP-dependent 6-phosphofructokinase from Blochmanniella floridana.